We begin with the raw amino-acid sequence, 125 residues long: Ribosome-binding factor A (125 aa).

Belongs to the RbfA family. As to quaternary structure, monomer. Binds 30S ribosomal subunits, but not 50S ribosomal subunits or 70S ribosomes.

Its subcellular location is the cytoplasm. One of several proteins that assist in the late maturation steps of the functional core of the 30S ribosomal subunit. Associates with free 30S ribosomal subunits (but not with 30S subunits that are part of 70S ribosomes or polysomes). Required for efficient processing of 16S rRNA. May interact with the 5'-terminal helix region of 16S rRNA. This is Ribosome-binding factor A from Desulfitobacterium hafniense (strain DSM 10664 / DCB-2).